Here is a 341-residue protein sequence, read N- to C-terminus: Alpha-ketoglutarate-dependent dioxygenase oryG (341 aa).

Histidine 100 is a binding site for substrate. Fe cation is bound by residues histidine 140 and aspartate 142. 2-oxoglutarate is bound at residue threonine 167. Residue histidine 299 participates in Fe cation binding. Residues arginine 311 and arginine 315 each coordinate 2-oxoglutarate. Arginine 315 provides a ligand contact to substrate.

This sequence belongs to the TfdA dioxygenase family. It depends on Fe(2+) as a cofactor.

It participates in secondary metabolite biosynthesis. Its function is as follows. Alpha-ketoglutarate-dependent dioxygenase; part of the gene cluster that mediates the biosynthesis of oryzines, natural products with an unusual maleidride backbone. The two subunits of the fungal fatty acid synthase oryfasA and oryfasB probably form octenoic acid. This fatty acid is most likely activated by the acyl-CoA ligase oryP to give octenyl-CoA before the citrate synthase-like protein oryE catalyzes condensation with oxaloacetate to form tricarboxylic acid. The next steps of the pathways are conjectural, but a favorite possible route has been proposed, beginning with decarboxylation and concomitant dehydration by the decarboxylase oryM, followed by tautomerization, which may lead to the production of a diene intermediate. Reduction of this diene intermediate could give the known metabolite piliformic acid. On the pathway to oryzine B and oryzine A, however, hydroxylation of the diene by the alpha-ketoglutarate-dependent dioxygenase oryG and lactonisation by the lactonohydrolases oryH or oryL could give oryzine B directly. Finally, enoyl reduction by the dehydrogenase oryD would then convert oryzine B into oryzine A. This chain is Alpha-ketoglutarate-dependent dioxygenase oryG, found in Aspergillus oryzae (strain ATCC 42149 / RIB 40) (Yellow koji mold).